Reading from the N-terminus, the 420-residue chain is Maturation protein A2 (420 aa).

3 RNA-binding regions span residues I158–K176, Q226–L236, and P294–W298.

Belongs to the Leviviricetes maturation protein family. As to quaternary structure, interacts with host MurA; this interaction inhibits the first step in host cell wall synthesis. Interacts with the capsid protein.

The protein localises to the virion. In terms of biological role, induces host cell lysis. Inhibits host MurA activity thereby blocking the synthesis of murein precursors necessary for the host cell wall biosynthesis. May be responsible for the attachment to the host pilus. Makes extensive contacts with the viral genome. This is Maturation protein A2 from Escherichia virus Qbeta (Bacteriophage Q-beta).